The following is a 252-amino-acid chain: Short-chain dehydrogenase/reductase eriH (252 aa).

I16, D65, N92, K125, Y158, K162, V191, and T193 together coordinate NADP(+). The active-site Proton acceptor is the Y158. Residue Y158 is the Proton donor of the active site. The active-site Lowers pKa of active site Tyr is K162.

This sequence belongs to the short-chain dehydrogenases/reductases (SDR) family.

The enzyme catalyses cyathadiol + reduced [NADPH--hemoprotein reductase] + O2 = cyathatriol + oxidized [NADPH--hemoprotein reductase] + H2O + H(+). The catalysed reaction is 11-O-acetylcyathatriol + A = 11-O-acetylcyathin A3 + AH2. It catalyses the reaction cyathatriol + A = cyathin A3 + AH2. The protein operates within secondary metabolite biosynthesis. Its function is as follows. Short-chain dehydrogenase/reductase; part of the gene cluster that mediates the biosynthesis of erinacines, cyathane-xylosides that show unique biological activities, including leishmanicidal activity, stimulating activity for nerve growth-factor synthesis, and agonistic activity toward the kappa opioid receptor. Within the pathway, eriH works with eriA to catalyze C-11 hydroxylation of cyathadiol to produce cyathatriol. EriH also catalyzes oxidation of 11-O-acetyl-cyathatriol into 1-O-acetylcyathin A3. In the absence of eriL and eriJ, the SDR eriH is able to convert cyathatriol to cyathin A3; this is likely a switching mechanism in the biosynthesis of cyathins (C-14 ketogroup)and erinacines (C-14 glycosylated group). The first step of the erinacines biosynthesis pathway is catalyzed by the geranylgeranyl diphosphate (GGPP) synthase eriE via conversion of farnesyl pyrophosphate and isopentyl pyrophosphate into geranylgeranyl pyrophosphate (GGPP). GGPP is then substrate of the diterpene cyclase eriG for the production of cyatha-3,12-diene. The cytochrome P450 monooxygenase eriI then hydroxylates cyatha-3,12-diene at C-14 of the seven-membered ring to produce erinacol, which is further hydroxylated at C-15 by the cytochrome P450 monooxygenase eriC to yield cyathadiol. The cytochrome P450 monooxygenase eriA then catalyzes C-11 hydroxylation in the presence of the short chain dehydrogenase/reductase (SDR) eriH, which leads to the production of cyathatriol. The acetyltransferase eriL converts cyathatriol into 11-O-acetyl-cyathatriol. The SDR eriH catalyzes further oxidation of 11-O-acetyl-cyathatriol into 1-O-acetylcyathin A3. Finally, the glycosyl transferase eriJ tranfers xylose from UDP-xylose onto C-14 of 11-O-acetyl-cyathatriol to form eracine Q. EriJ is also able to convert 11-O-acetyl-cyathatriol to eracine Q2 by using UDP-D-glucose as cosubstrate, but at a lower rate. The chain is Short-chain dehydrogenase/reductase eriH from Hericium erinaceus (Lion's mane mushroom).